The primary structure comprises 53 residues: uncharacterized protein (53 aa).

The first 19 residues, 1–19 (MKLLTILILFYSFFMNLQA), serve as a signal peptide directing secretion.

This is an uncharacterized protein from Autographa californica nuclear polyhedrosis virus (AcMNPV).